Here is a 421-residue protein sequence, read N- to C-terminus: FBD-associated F-box protein At5g56370 (421 aa).

The region spanning 1-52 (MDSISLLPDDFLLRILSLLPTKDVLNTSVLSKRWRYLWKLVPKLQYSLIDKN) is the F-box domain. The FBD domain maps to 332–382 (HWEEPSSVPETLMFVLETLEWRNYRGLKMENELASFLLKHSRRLKIATFSP).

The protein is FBD-associated F-box protein At5g56370 of Arabidopsis thaliana (Mouse-ear cress).